Here is a 746-residue protein sequence, read N- to C-terminus: 4-hydroxy-3-methylbut-2-en-1-yl diphosphate synthase (flavodoxin) (746 aa).

The [4Fe-4S] cluster site is built by Cys-653, Cys-656, Cys-687, and Glu-694.

Belongs to the IspG family. [4Fe-4S] cluster serves as cofactor.

It carries out the reaction (2E)-4-hydroxy-3-methylbut-2-enyl diphosphate + oxidized [flavodoxin] + H2O + 2 H(+) = 2-C-methyl-D-erythritol 2,4-cyclic diphosphate + reduced [flavodoxin]. Its pathway is isoprenoid biosynthesis; isopentenyl diphosphate biosynthesis via DXP pathway; isopentenyl diphosphate from 1-deoxy-D-xylulose 5-phosphate: step 5/6. Its function is as follows. Converts 2C-methyl-D-erythritol 2,4-cyclodiphosphate (ME-2,4cPP) into 1-hydroxy-2-methyl-2-(E)-butenyl 4-diphosphate. This Chlorobaculum tepidum (strain ATCC 49652 / DSM 12025 / NBRC 103806 / TLS) (Chlorobium tepidum) protein is 4-hydroxy-3-methylbut-2-en-1-yl diphosphate synthase (flavodoxin).